The chain runs to 396 residues: Na(+)/H(+) antiporter NhaA (396 aa).

Transmembrane regions (helical) follow at residues 14–34, 59–79, 95–115, 124–144, 154–174, 178–198, 205–225, 254–274, 278–298, 328–348, and 363–383; these read ASGI…NSGL, LLLW…GLEV, TFPA…YTFF, AGWA…MALL, VFLL…IALF, QLSL…LWMN, IGLY…SGVH, ALHP…NAGV, GIGL…GLFV, IFAV…IASL, and LGIL…LRMS.

This sequence belongs to the NhaA Na(+)/H(+) (TC 2.A.33) antiporter family.

Its subcellular location is the cell inner membrane. It catalyses the reaction Na(+)(in) + 2 H(+)(out) = Na(+)(out) + 2 H(+)(in). Functionally, na(+)/H(+) antiporter that extrudes sodium in exchange for external protons. The polypeptide is Na(+)/H(+) antiporter NhaA (Aeromonas salmonicida (strain A449)).